We begin with the raw amino-acid sequence, 89 residues long: UPF0147 protein STK_04605 (89 aa).

It belongs to the UPF0147 family.

The sequence is that of UPF0147 protein STK_04605 from Sulfurisphaera tokodaii (strain DSM 16993 / JCM 10545 / NBRC 100140 / 7) (Sulfolobus tokodaii).